The chain runs to 125 residues: Large ribosomal subunit protein bL12 (125 aa).

Belongs to the bacterial ribosomal protein bL12 family. In terms of assembly, homodimer. Part of the ribosomal stalk of the 50S ribosomal subunit. Forms a multimeric L10(L12)X complex, where L10 forms an elongated spine to which 2 to 4 L12 dimers bind in a sequential fashion. Binds GTP-bound translation factors.

Its function is as follows. Forms part of the ribosomal stalk which helps the ribosome interact with GTP-bound translation factors. Is thus essential for accurate translation. The protein is Large ribosomal subunit protein bL12 of Liberibacter africanus (Citrus greening disease).